Here is a 684-residue protein sequence, read N- to C-terminus: MSASGVLSFTQQGWEQVLAKVKRAVVYLDAACAESLHWGCGSTRLLEAVGGPDCHLREFEPDAIGGGAKQPKAVFVLSCLLKGRTVEILRDIICRSHFQYCVVVTTVSHAVHLTANHVPAAAAAEMEGQQPVFEQLEEKLCEWMGNMNYTAEVFHVPLLLAPVAPHFALTPAFASLFPLLPQDVHLLNSARPDKRKLGSLGDVDSTTLTPELLLQIRCLVSGLSSLCEHLGVREECFAVGSLSQVIAADLANYAPAKNRKKTAAGRASVVFVDRTLDLTGAVGHHGDNLVEKIISALPQLPGHTNDVMVNMIALTALHTEEENYNVVAPGCLSQSSDTTAKALWEALLNTKHKEAVMEVRRHLVEAASRENLPIKMSMGRVTPGQLMSYIQLFKNNLKALMNHCGLLQLGLATAQTLKHPQTAKWDNFLAFERLLLQSIGESAMSVVLNQLLPMIKPVTQRTNEDYSPEELLILLIYIYSVTGELTVDKDLCEAEEKVKKALAQVFCEESGLSPLLQKITDWDSSINLTFHKSKIAVDELFTSLRDIAGARSLLKQFKSVYVPGNHTHQASYKPLLKQVVEEIFHPERPDSVDIEHMSSGLTDLLKTGFSMFMKVSRPHPSDYPLLILFVVGGVTVSEVKMVKDLVASLKPGTQVIVLSTRLLKPLNIPELLFATDRLHPDLGF.

This sequence belongs to the STXBP/unc-18/SEC1 family.

Its function is as follows. May be involved in protein transport. In Homo sapiens (Human), this protein is Sec1 family domain-containing protein 2 (SCFD2).